The chain runs to 57 residues: Benzylsuccinate synthase gamma subunit (57 aa).

In terms of assembly, heterohexamer composed of 2 alpha subunits, 2 beta subunits and 2 gamma subunits.

It catalyses the reaction toluene + fumarate = 2-benzylsuccinate. Its pathway is xenobiotic degradation; toluene degradation. Activated by the benzylsuccinate synthase activating enzyme BssD. Rapidly inactivated by oxygen. Functionally, catalyzes the addition of fumarate to the methyl group of toluene, leading to the formation of benzylsuccinate. This is Benzylsuccinate synthase gamma subunit (bssC) from Thauera aromatica.